The following is a 506-amino-acid chain: ATP synthase subunit alpha (506 aa).

Residue 169–176 (GDRQTGKT) coordinates ATP.

The protein belongs to the ATPase alpha/beta chains family. In terms of assembly, F-type ATPases have 2 components, CF(1) - the catalytic core - and CF(0) - the membrane proton channel. CF(1) has five subunits: alpha(3), beta(3), gamma(1), delta(1), epsilon(1). CF(0) has three main subunits: a(1), b(2) and c(9-12). The alpha and beta chains form an alternating ring which encloses part of the gamma chain. CF(1) is attached to CF(0) by a central stalk formed by the gamma and epsilon chains, while a peripheral stalk is formed by the delta and b chains.

The protein localises to the cell membrane. It carries out the reaction ATP + H2O + 4 H(+)(in) = ADP + phosphate + 5 H(+)(out). Produces ATP from ADP in the presence of a proton gradient across the membrane. The alpha chain is a regulatory subunit. The polypeptide is ATP synthase subunit alpha (Lawsonia intracellularis (strain PHE/MN1-00)).